The primary structure comprises 426 residues: 6-Hydroxy-7-prenyldeoxybrevianamide E synthase notC (426 aa).

A substrate-binding site is contributed by Glu94. 3 residues coordinate dimethylallyl diphosphate: Arg105, Lys191, and Tyr193. Tyr195 contacts substrate. The dimethylallyl diphosphate site is built by Lys267, Tyr269, Gln352, Tyr354, Tyr418, and Tyr422.

It belongs to the tryptophan dimethylallyltransferase family.

It carries out the reaction 6-hydroxydeoxybrevianamide E + dimethylallyl diphosphate = notoamide S + diphosphate. Its pathway is alkaloid biosynthesis. Its activity is regulated as follows. Addition of 5 mM Mg(2+), Ca(2+) or Mn(2+) slightly enhances catalysis (about 100-120%). Significant reduction of enzyme activity (2%-35%) is observed with Cu(2+), Zn(2+), Fe(2+), or Sn(2+) (5 mM). Prenyltransferase; part of the gene cluster that mediates the biosynthesis of notoamide, a fungal indole alkaloid that belongs to a family of natural products containing a characteristic bicyclo[2.2.2]diazaoctane core. The first step of notoamide biosynthesis involves coupling of L-proline and L-tryptophan by the bimodular NRPS notE, to produce cyclo-L-tryptophan-L-proline called brevianamide F. The reverse prenyltransferase notF then acts as a deoxybrevianamide E synthase and converts brevianamide F to deoxybrevianamide E via reverse prenylation at C-2 of the indole ring leading to the bicyclo[2.2.2]diazaoctane core. Deoxybrevianamide E is further hydroxylated at C-6 of the indole ring, likely catalyzed by the cytochrome P450 monooxygenase notG, to yield 6-hydroxy-deoxybrevianamide E. 6-hydroxy-deoxybrevianamide E is a specific substrate of the prenyltransferase notC for normal prenylation at C-7 to produce 6-hydroxy-7-prenyl-deoxybrevianamide, also called notoamide S. As the proposed pivotal branching point in notoamide biosynthesis, notoamide S can be diverted to notoamide E through an oxidative pyran ring closure putatively catalyzed by either notH cytochrome P450 monooxygenase or the notD FAD-linked oxidoreductase. This step would be followed by an indole 2,3-epoxidation-initiated pinacol-like rearrangement catalyzed by the notB FAD-dependent monooxygenase leading to the formation of notoamide C and notoamide D. On the other hand notoamide S is converted to notoamide T by notH (or notD), a bifunctional oxidase that also functions as the intramolecular Diels-Alderase responsible for generation of (+)-notoamide T. To generate antipodal (-)-notoaminide T, notH' (or notD') in Aspergillus versicolor is expected to catalyze a Diels-Alder reaction leading to the opposite stereochemistry. The remaining oxidoreductase notD (or notH) likely catalyzes the oxidative pyran ring formation to yield (+)-stephacidin A. The FAD-dependent monooxygenase notI is highly similar to notB and is predicted to catalyze a similar conversion from (+)-stephacidin A to (-)-notoamide B via the 2,3-epoxidation of (+)-stephacidin A followed by a pinacol-type rearrangement. Finally, it remains unclear which enzyme could be responsible for the final hydroxylation steps leading to notoamide A and sclerotiamide. In Aspergillus sp. (strain MF297-2), this protein is 6-Hydroxy-7-prenyldeoxybrevianamide E synthase notC.